A 353-amino-acid polypeptide reads, in one-letter code: C-X-C chemokine receptor type 4 (353 aa).

The segment at 1-22 (MDGFRIFTSDNYTEDDLGSGDY) is important for chemokine binding and signaling. The Extracellular portion of the chain corresponds to 1 to 39 (MDGFRIFTSDNYTEDDLGSGDYDSIKEPCFREENAHFNR). A glycan (N-linked (GlcNAc...) asparagine) is linked at Asn-11. Residue Tyr-12 is modified to Sulfotyrosine. O-linked (Xyl...) (chondroitin sulfate) serine glycosylation is present at Ser-19. A Sulfotyrosine modification is found at Tyr-22. Disulfide bonds link Cys-29–Cys-275 and Cys-110–Cys-187. The helical transmembrane segment at 40 to 64 (IFLPTVYSIIFLTGIVGNGLVILVM) threads the bilayer. The Cytoplasmic segment spans residues 65-78 (GYQKKLRSMTDKYR). A helical membrane pass occupies residues 79 to 100 (LHLSVADLLFVLTLPFWAVDAV). Residues 95 to 98 (WAVD) form a chemokine binding region. The Extracellular portion of the chain corresponds to 101–111 (ANWYFGKFLCK). A helical transmembrane segment spans residues 112–131 (AVHVIYTVNLYSSVLILAFI). The chemokine binding stretch occupies residues 114-118 (HVIYT). Over 132-155 (SLDRYLAIVHATNSQRPRKLLAEK) the chain is Cytoplasmic. An Important for signaling motif is present at residues 134–136 (DRY). The involved in dimerization; when bound to chemokine stretch occupies residues 136 to 148 (YLAIVHATNSQRP). A helical membrane pass occupies residues 156–175 (VVYVGVWIPALLLTIPDFIF). At 176 to 196 (ANVREGDGRYICDRFYPNDLW) the chain is on the extracellular side. Residues 187-191 (CDRFY) are chemokine binding, important for signaling. Positions 192–211 (PNDLWLVVFQFQHIMVGLIL) are involved in dimerization. The chain crosses the membrane as a helical span at residues 197–217 (LVVFQFQHIMVGLILPGIVIL). Residues 218–242 (SCYCIIISKLSHSKGYQKRKALKTT) are Cytoplasmic-facing. A helical transmembrane segment spans residues 243-262 (VILILAFFACWLPYYIGISI). Residues 263–283 (DSFILLEIIQQGCEFESTVHK) are Extracellular-facing. An involved in dimerization region spans residues 267 to 269 (LLE). A helical membrane pass occupies residues 284-303 (WISITEALAFFHCCLNPILY). Residues 304-353 (AFLGAKFKTSAQHALTSVSRGSSLKILSKGKRGGHSSVSTESESSSFHSS) lie on the Cytoplasmic side of the membrane. Phosphoserine occurs at positions 320 and 322. A phosphoserine; by PKC and GRK6 mark is found at Ser-325 and Ser-326. Positions 330-353 (LSKGKRGGHSSVSTESESSSFHSS) are disordered. Ser-331 is modified (phosphoserine; by GRK6). A Glycyl lysine isopeptide (Lys-Gly) (interchain with G-Cter in ubiquitin) cross-link involves residue Lys-332. Residues 338-353 (HSSVSTESESSSFHSS) show a composition bias toward low complexity. Residue Ser-340 is modified to Phosphoserine; by GRK6. 2 positions are modified to phosphoserine: Ser-349 and Ser-352.

The protein belongs to the G-protein coupled receptor 1 family. Monomer. Can form homodimers. Interacts with CD164. Interacts with ARRB2; the interaction is dependent on the C-terminal phosphorylation of CXCR4 and allows activation of MAPK1 and MAPK3. Interacts with ARR3; the interaction is dependent on the C-terminal phosphorylation of CXCR4 and modulates calcium mobilization. Interacts with RNF113A; the interaction, enhanced by CXCL12, promotes CXCR4 ubiquitination and subsequent degradation. Interacts (via the cytoplasmic C-terminal) with ITCH (via the WW domains I and II); the interaction, enhanced by CXCL12, promotes CXCR4 ubiquitination and leads to its degradation. Interacts with extracellular ubiquitin. Interacts with DBN1; this interaction is enhanced by antigenic stimulation. Following LPS binding, may form a complex with GDF5, HSP90AA1 and HSPA8. Phosphorylated on agonist stimulation. Rapidly phosphorylated on serine and threonine residues in the C-terminal. Phosphorylation at Ser-325 and Ser-326 leads to recruitment of ITCH, ubiquitination and protein degradation. Post-translationally, ubiquitinated after ligand binding, leading to its degradation. Ubiquitinated by ITCH at the cell membrane on agonist stimulation. The ubiquitin-dependent mechanism, endosomal sorting complex required for transport (ESCRT), then targets CXCR4 for lysosomal degradation. This process is dependent also on prior Ser-/Thr-phosphorylation in the C-terminal of CXCR4. Also binding of ARRB1 to STAM negatively regulates CXCR4 sorting to lysosomes though modulating ubiquitination of SFR5S. In terms of processing, sulfation is required for efficient binding of CXCL12/SDF-1alpha and promotes its dimerization. O- and N-glycosylated. N-glycosylation can mask coreceptor function. The O-glycosylation chondroitin sulfate attachment does not affect interaction with CXCL12/SDF-1alpha nor its coreceptor activity.

It is found in the cell membrane. The protein resides in the cell junction. The protein localises to the early endosome. It localises to the late endosome. Its subcellular location is the lysosome. Receptor for the C-X-C chemokine CXCL12/SDF-1 that transduces a signal by increasing intracellular calcium ion levels and enhancing MAPK1/MAPK3 activation. Involved in the AKT signaling cascade. Plays a role in regulation of cell migration, e.g. during wound healing. Acts as a receptor for extracellular ubiquitin; leading to enhanced intracellular calcium ions and reduced cellular cAMP levels. Binds bacterial lipopolysaccharide (LPS) et mediates LPS-induced inflammatory response, including TNF secretion by monocytes. Involved in hematopoiesis and in cardiac ventricular septum formation. Also plays an essential role in vascularization of the gastrointestinal tract, probably by regulating vascular branching and/or remodeling processes in endothelial cells. Involved in cerebellar development. In the CNS, could mediate hippocampal-neuron survival. The chain is C-X-C chemokine receptor type 4 (CXCR4) from Sus scrofa (Pig).